Here is a 349-residue protein sequence, read N- to C-terminus: Phosphoribosylformylglycinamidine cyclo-ligase (349 aa).

Belongs to the AIR synthase family.

It is found in the cytoplasm. It catalyses the reaction 2-formamido-N(1)-(5-O-phospho-beta-D-ribosyl)acetamidine + ATP = 5-amino-1-(5-phospho-beta-D-ribosyl)imidazole + ADP + phosphate + H(+). It participates in purine metabolism; IMP biosynthesis via de novo pathway; 5-amino-1-(5-phospho-D-ribosyl)imidazole from N(2)-formyl-N(1)-(5-phospho-D-ribosyl)glycinamide: step 2/2. The protein is Phosphoribosylformylglycinamidine cyclo-ligase of Lawsonia intracellularis (strain PHE/MN1-00).